A 291-amino-acid chain; its full sequence is Protease HtpX homolog (291 aa).

Helical transmembrane passes span 11–31 (INTF…GLLA) and 34–54 (FLGM…ACVQ). Histidine 140 contributes to the Zn(2+) binding site. The active site involves glutamate 141. Residue histidine 144 participates in Zn(2+) binding. Helical transmembrane passes span 155-175 (IVFG…RALI) and 186-206 (AFSF…AMLV). Glutamate 215 contributes to the Zn(2+) binding site.

The protein belongs to the peptidase M48B family. It depends on Zn(2+) as a cofactor.

It localises to the cell membrane. The chain is Protease HtpX homolog from Tropheryma whipplei (strain Twist) (Whipple's bacillus).